A 102-amino-acid polypeptide reads, in one-letter code: Large ribosomal subunit protein uL24 (102 aa).

This sequence belongs to the universal ribosomal protein uL24 family. In terms of assembly, part of the 50S ribosomal subunit.

One of two assembly initiator proteins, it binds directly to the 5'-end of the 23S rRNA, where it nucleates assembly of the 50S subunit. Functionally, one of the proteins that surrounds the polypeptide exit tunnel on the outside of the subunit. This Rhizobium leguminosarum bv. trifolii (strain WSM2304) protein is Large ribosomal subunit protein uL24.